The sequence spans 177 residues: Large ribosomal subunit protein uL6 (177 aa).

Belongs to the universal ribosomal protein uL6 family. As to quaternary structure, part of the 50S ribosomal subunit.

This protein binds to the 23S rRNA, and is important in its secondary structure. It is located near the subunit interface in the base of the L7/L12 stalk, and near the tRNA binding site of the peptidyltransferase center. The sequence is that of Large ribosomal subunit protein uL6 from Polynucleobacter asymbioticus (strain DSM 18221 / CIP 109841 / QLW-P1DMWA-1) (Polynucleobacter necessarius subsp. asymbioticus).